The sequence spans 219 residues: Phosphate-specific transport system accessory protein PhoU homolog (219 aa).

Belongs to the PhoU family. In terms of assembly, homodimer.

Its subcellular location is the cytoplasm. Its function is as follows. Plays a role in the regulation of phosphate uptake. Encoded together with proteins of the phosphate-specific transport (Pst) system in the polycistronic pstSCAB-phoU operon. The chain is Phosphate-specific transport system accessory protein PhoU homolog from Clostridium acetobutylicum (strain ATCC 824 / DSM 792 / JCM 1419 / IAM 19013 / LMG 5710 / NBRC 13948 / NRRL B-527 / VKM B-1787 / 2291 / W).